The primary structure comprises 659 residues: Protein kinase byr2 (659 aa).

The 64-residue stretch at 4 to 67 (YTSKEVAEWL…LKQRDYLREF (64 aa)) folds into the SAM domain. Residues 180–190 (PKLSSVLPTST) are compositionally biased toward low complexity. 2 disordered regions span residues 180 to 209 (PKLS…YQRP) and 354 to 387 (SFSP…EEDT). Positions 354 to 365 (SFSPGSSPSFIE) are enriched in polar residues. Low complexity predominate over residues 367–380 (PSPISPTSTTSEDT). Residues 394-658 (WIRGALIGSG…ASELLSHPFV (265 aa)) enclose the Protein kinase domain. Residues 400 to 408 (IGSGSFGQV) and lysine 423 contribute to the ATP site. The active-site Proton acceptor is aspartate 522.

The protein belongs to the protein kinase superfamily. STE Ser/Thr protein kinase family. MAP kinase kinase kinase subfamily. As to quaternary structure, interacts with rad24 and rad25; these prevent its translocation to the cell membrane during nitrogen starvation.

Its subcellular location is the cytoplasm. It is found in the cell membrane. It carries out the reaction L-seryl-[protein] + ATP = O-phospho-L-seryl-[protein] + ADP + H(+). The enzyme catalyses L-threonyl-[protein] + ATP = O-phospho-L-threonyl-[protein] + ADP + H(+). In terms of biological role, serine/threonine protein kinase involved in conjugation and sporulation. It is thought that it phosphorylates the byr1 protein kinase which itself phosphorylate the spk1 kinase. The polypeptide is Protein kinase byr2 (Schizosaccharomyces pombe (strain 972 / ATCC 24843) (Fission yeast)).